The primary structure comprises 492 residues: Adenosylhomocysteinase-like 2 (492 aa).

The segment at 43 to 64 (FTGSSDEEDVSPKDNHQRNSAG) is disordered. Substrate-binding residues include Asp192 and Glu217. Residue 218–220 (SVT) participates in NAD(+) binding. Substrate-binding residues include Lys247 and Asp251. NAD(+)-binding positions include 283 to 288 (GDVGKG), Glu304, 360 to 362 (MGH), Asn407, Lys486, 486 to 490 (KANYY), and Tyr490.

Belongs to the adenosylhomocysteinase family. NAD(+) serves as cofactor.

Its function is as follows. Might play a role in the regulation of methionine metabolism. This is Adenosylhomocysteinase-like 2 from Drosophila melanogaster (Fruit fly).